The chain runs to 1002 residues: Leucine-rich repeat receptor-like serine/threonine-protein kinase BAM2 (1002 aa).

Positions 1-22 (MKLLLLLLLLLLLHISHSFTVA) are cleaved as a signal peptide. Residues 23–636 (KPITELHALL…SHVKPLSATT (614 aa)) lie on the Extracellular side of the membrane. Residues asparagine 51, asparagine 80, asparagine 97, asparagine 123, asparagine 130, asparagine 153, and asparagine 164 are each glycosylated (N-linked (GlcNAc...) asparagine). LRR repeat units lie at residues 68 to 92 (LRHV…VAHL), 93 to 116 (PLLQ…ISNL), 118 to 140 (ELRH…LSSG), 141 to 165 (LVNL…LTNL), 167 to 188 (QLRH…TYGT), 189 to 213 (WPVL…IGNL), 215 to 238 (TLRE…IGNL), 239 to 262 (SELV…IGKL), 263 to 285 (QKLD…ELGL), 286 to 309 (ISSL…SFSQ), 311 to 334 (KNLT…IGEM), 335 to 358 (PELE…LGEN), 359 to 382 (GRLV…MCSG), 384 to 406 (RLMT…LGKC), 407 to 430 (ESLT…LFGL), 431 to 456 (PKLS…GVSG), 458 to 479 (LGQI…IGNL), 480 to 503 (SGVQ…IGRL), 505 to 527 (QLSK…ISRC), 528 to 551 (KLLT…LTGM), 552 to 575 (KILN…IASM), and 577 to 600 (SLTS…QFSY). N-linked (GlcNAc...) asparagine glycans are attached at residues asparagine 212 and asparagine 237. N-linked (GlcNAc...) asparagine glycosylation is found at asparagine 312 and asparagine 346. Asparagine 420 carries an N-linked (GlcNAc...) asparagine glycan. Asparagine 478 carries an N-linked (GlcNAc...) asparagine glycan. Asparagine 558, asparagine 587, and asparagine 602 each carry an N-linked (GlcNAc...) asparagine glycan. The helical transmembrane segment at 637–657 (KLLLVLGLLFCSMVFAIVAII) threads the bilayer. At 658 to 1002 (KARSLRNASE…SGSPPDLLSN (345 aa)) the chain is on the cytoplasmic side. Threonine 682 bears the Phosphothreonine mark. The Protein kinase domain occupies 690-967 (LKEDNIIGKG…VQILTEIPKI (278 aa)). ATP is bound by residues 696-704 (IGKGGAGIV) and lysine 718. 2 positions are modified to phosphotyrosine: tyrosine 765 and tyrosine 803. The active-site Proton acceptor is aspartate 816. Serine 851 is subject to Phosphoserine. A phosphotyrosine mark is found at tyrosine 859 and tyrosine 866. Residue threonine 867 is modified to Phosphothreonine. Positions 969–1002 (LSKQQAAESDVTEKAPAINESSPDSGSPPDLLSN) are disordered. Low complexity predominate over residues 989–1002 (SSPDSGSPPDLLSN).

This sequence belongs to the protein kinase superfamily. Ser/Thr protein kinase family. As to quaternary structure, interacts with BAM1 and CLV1. Binds to the CLV3, CLE11, CLE18, CLE19, CLE22, CLE25, CLE26, CLE40, CLE41 and CLE42 mature peptides, probably via its extracellular leucine-rich repeat region. In terms of tissue distribution, expressed in seedlings, roots, rosette leaves, stems, inflorescences, flowers and siliques.

Its subcellular location is the cell membrane. The enzyme catalyses L-seryl-[protein] + ATP = O-phospho-L-seryl-[protein] + ADP + H(+). The catalysed reaction is L-threonyl-[protein] + ATP = O-phospho-L-threonyl-[protein] + ADP + H(+). Functionally, necessary for male gametophyte development, as well as ovule specification and function. Involved in cell-cell communication process required during early anther development, and regulating cell division and differentiation to organize cell layers. Required for the development of high-ordered vascular strands within the leaf and a correlated control of leaf shape, size and symmetry. May regulate the CLV1-dependent CLV3-mediated signaling in meristems maintenance. This Arabidopsis thaliana (Mouse-ear cress) protein is Leucine-rich repeat receptor-like serine/threonine-protein kinase BAM2 (BAM2).